The chain runs to 53 residues: Large ribosomal subunit protein bL33A (53 aa).

Belongs to the bacterial ribosomal protein bL33 family.

This is Large ribosomal subunit protein bL33A (rpmG1) from Mycoplasma genitalium (strain ATCC 33530 / DSM 19775 / NCTC 10195 / G37) (Mycoplasmoides genitalium).